The following is an 83-amino-acid chain: Protein midgut expression 1 (83 aa).

Endoderm-specific pattern of expression during embryogenesis; anterior and posterior midgut primordia.

Functionally, involved in morphogenesis and development. In Drosophila melanogaster (Fruit fly), this protein is Protein midgut expression 1 (mex1).